Here is a 392-residue protein sequence, read N- to C-terminus: Chloramphenicol resistance protein (392 aa).

12 helical membrane-spanning segments follow: residues 6-26 (YLLA…AGLV), 42-62 (TLTS…AALA), 71-91 (LLGF…TTSF), 100-120 (VAAL…AALV), 129-149 (LAVL…GGSL), 160-180 (FWAV…AIPA), 205-225 (LLLA…SFTF), 239-259 (LWIS…VTVA), 268-288 (AQVL…LAML), 294-314 (ALLT…STLI), 332-352 (ATAA…TTLG), and 358-378 (LGPL…AFPF).

It belongs to the major facilitator superfamily.

The protein resides in the cell membrane. This is Chloramphenicol resistance protein (cmlR) from Streptomyces lividans.